The primary structure comprises 274 residues: MSRIARRFAALKAQDRGALIPYLQACDPDYETSLALLRAMPGAGADLIEIGVPFSDPSADGPTIQAAARRGLAAGATMARVLEMVTRFREGDADTPIVLMGYLNPIEAYGPARFCADAARAGVDGLIVVDLPPEEADLLEGPAADHGLDIIRLVAPTTDDTRLPLVCRHASGFIYYVSITGVTGTRTASADELAQALPRLRAATDLPVAIGFGIRTPEQAAAAVRVADAAVVASALIATLEDSLDAEGRAGPDTLKRVLAQLEALGRAVRNART.

Active-site proton acceptor residues include Glu-49 and Asp-60.

This sequence belongs to the TrpA family. In terms of assembly, tetramer of two alpha and two beta chains.

It catalyses the reaction (1S,2R)-1-C-(indol-3-yl)glycerol 3-phosphate + L-serine = D-glyceraldehyde 3-phosphate + L-tryptophan + H2O. The protein operates within amino-acid biosynthesis; L-tryptophan biosynthesis; L-tryptophan from chorismate: step 5/5. Functionally, the alpha subunit is responsible for the aldol cleavage of indoleglycerol phosphate to indole and glyceraldehyde 3-phosphate. In Gluconacetobacter diazotrophicus (strain ATCC 49037 / DSM 5601 / CCUG 37298 / CIP 103539 / LMG 7603 / PAl5), this protein is Tryptophan synthase alpha chain.